The sequence spans 426 residues: Probable imidazolonepropionase (426 aa).

4-imidazolone-5-propanoate contacts are provided by Tyr159 and His192. Tyr159 is a binding site for N-formimidoyl-L-glutamate. His260 lines the Fe(3+) pocket. Residue His260 coordinates Zn(2+). Glu263 serves as a coordination point for 4-imidazolone-5-propanoate. Residue Asp334 coordinates Fe(3+). Asp334 contacts Zn(2+). Asn336 provides a ligand contact to N-formimidoyl-L-glutamate.

Belongs to the metallo-dependent hydrolases superfamily. HutI family. It depends on Zn(2+) as a cofactor. The cofactor is Fe(3+).

The catalysed reaction is 4-imidazolone-5-propanoate + H2O = N-formimidoyl-L-glutamate. It participates in amino-acid degradation; L-histidine degradation into L-glutamate; N-formimidoyl-L-glutamate from L-histidine: step 3/3. This is Probable imidazolonepropionase (AMDHD1) from Homo sapiens (Human).